Here is a 257-residue protein sequence, read N- to C-terminus: Putative transcription factor R430 (257 aa).

Disordered regions lie at residues 1–35 (MEKF…DNNS) and 58–77 (SLKS…PNKS). Residues 7 to 25 (TDNTTDNTTDNTTDNTTDN) show a composition bias toward low complexity. Positions 26–35 (TTDKLTDNNS) are enriched in basic and acidic residues.

This sequence belongs to the nucleo-cytoplasmic large DNA viruses (NCLDVs) VLTF-3 family.

Functionally, putative transcription factor. This is Putative transcription factor R430 from Acanthamoeba polyphaga (Amoeba).